The sequence spans 298 residues: HTH-type transcriptional regulator ArgP (298 aa).

The 57-residue stretch at 4–60 (VDYRWVAALDAVIAQRGFERAAEKLCITQSAVSQRIKQLEKLMAQPLLVREQPPRPT) folds into the HTH lysR-type domain. Positions 21-40 (FERAAEKLCITQSAVSQRIK) form a DNA-binding region, H-T-H motif.

It belongs to the LysR transcriptional regulatory family. As to quaternary structure, homodimer.

In terms of biological role, controls the transcription of genes involved in arginine and lysine metabolism. In Photobacterium profundum (strain SS9), this protein is HTH-type transcriptional regulator ArgP.